We begin with the raw amino-acid sequence, 227 residues long: Uracil-DNA glycosylase 2 (227 aa).

The active-site Proton acceptor is Asp-67.

Belongs to the uracil-DNA glycosylase (UDG) superfamily. UNG family.

It is found in the cytoplasm. The enzyme catalyses Hydrolyzes single-stranded DNA or mismatched double-stranded DNA and polynucleotides, releasing free uracil.. Functionally, excises uracil residues from the DNA which can arise as a result of misincorporation of dUMP residues by DNA polymerase or due to deamination of cytosine. The polypeptide is Uracil-DNA glycosylase 2 (ung2) (Streptomyces coelicolor (strain ATCC BAA-471 / A3(2) / M145)).